The sequence spans 310 residues: Homoserine kinase (310 aa).

91 to 101 (PIGSGLGSSAC) provides a ligand contact to ATP.

Belongs to the GHMP kinase family. Homoserine kinase subfamily.

The protein resides in the cytoplasm. The catalysed reaction is L-homoserine + ATP = O-phospho-L-homoserine + ADP + H(+). The protein operates within amino-acid biosynthesis; L-threonine biosynthesis; L-threonine from L-aspartate: step 4/5. In terms of biological role, catalyzes the ATP-dependent phosphorylation of L-homoserine to L-homoserine phosphate. The polypeptide is Homoserine kinase (Escherichia coli O17:K52:H18 (strain UMN026 / ExPEC)).